The primary structure comprises 128 residues: Gastrotropin (128 aa).

Residue Ala-2 is modified to N-acetylalanine.

It belongs to the calycin superfamily. Fatty-acid binding protein (FABP) family. Predominantly expressed in ileum; also expressed in ovary.

It is found in the cytoplasm. Its subcellular location is the membrane. Its function is as follows. Binds to bile acids and is involved in enterohepatic bile acid metabolism. Required for efficient apical to basolateral transport of conjugated bile acids in ileal enterocytes. Stimulates gastric acid and pepsinogen secretion. This chain is Gastrotropin (Fabp6), found in Rattus norvegicus (Rat).